We begin with the raw amino-acid sequence, 436 residues long: Fibrinogen gamma chain (436 aa).

A signal peptide spans 1 to 25 (MSWSLQPPSFLLCCLLLLFSPTGLA). N-linked (GlcNAc...) asparagine glycosylation is present at N77. The Fibrinogen C-terminal domain maps to 169 to 415 (QIHDTTGKDC…ETTMKIIPFN (247 aa)). C178 and C207 form a disulfide bridge. Ca(2+) is bound by residues D343, D345, and G349. A disulfide bond links C351 and C364. Q423 participates in a covalent cross-link: Isoglutamyl lysine isopeptide (Gln-Lys) (interchain with K-431). A Phosphoserine modification is found at S430. Residue K431 forms an Isoglutamyl lysine isopeptide (Lys-Gln) (interchain with Q-423) linkage.

As to quaternary structure, heterohexamer; disulfide linked. Contains 2 sets of 3 non-identical chains (alpha, beta and gamma). The 2 heterotrimers are in head to head conformation with the N-termini in a small central domain. In terms of processing, conversion of fibrinogen to fibrin is triggered by thrombin, which cleaves fibrinopeptides A and B from alpha and beta chains, and thus exposes the N-terminal polymerization sites responsible for the formation of the soft clot. The soft clot is converted into the hard clot by factor XIIIA which catalyzes the epsilon-(gamma-glutamyl)lysine cross-linking between gamma chains (stronger) and between alpha chains (weaker) of different monomers.

It is found in the secreted. Together with fibrinogen alpha (FGA) and fibrinogen beta (FGB), polymerizes to form an insoluble fibrin matrix. Fibrin has a major function in hemostasis as one of the primary components of blood clots. In addition, functions during the early stages of wound repair to stabilize the lesion and guide cell migration during re-epithelialization. Was originally thought to be essential for platelet aggregation, based on in vitro studies using anticoagulated blood. However, subsequent studies have shown that it is not absolutely required for thrombus formation in vivo. Enhances expression of SELP in activated platelets via an ITGB3-dependent pathway. Maternal fibrinogen is essential for successful pregnancy. Fibrin deposition is also associated with infection, where it protects against IFNG-mediated hemorrhage. May also facilitate the immune response via both innate and T-cell mediated pathways. The chain is Fibrinogen gamma chain (Fgg) from Mus musculus (Mouse).